We begin with the raw amino-acid sequence, 37 residues long: Large ribosomal subunit protein bL36 (37 aa).

Belongs to the bacterial ribosomal protein bL36 family.

This is Large ribosomal subunit protein bL36 from Leptothrix cholodnii (strain ATCC 51168 / LMG 8142 / SP-6) (Leptothrix discophora (strain SP-6)).